A 392-amino-acid polypeptide reads, in one-letter code: Acetyl-CoA acetyltransferase (392 aa).

Catalysis depends on C89, which acts as the Acyl-thioester intermediate. Active-site proton acceptor residues include H348 and C378.

Belongs to the thiolase-like superfamily. Thiolase family. As to quaternary structure, homotetramer.

The protein localises to the cytoplasm. The enzyme catalyses 2 acetyl-CoA = acetoacetyl-CoA + CoA. It functions in the pathway biopolymer metabolism; poly-(R)-3-hydroxybutanoate biosynthesis. It participates in metabolic intermediate biosynthesis; (R)-mevalonate biosynthesis; (R)-mevalonate from acetyl-CoA: step 1/3. This chain is Acetyl-CoA acetyltransferase, found in Shinella zoogloeoides (Crabtreella saccharophila).